A 261-amino-acid polypeptide reads, in one-letter code: Probable trans-aconitate 2-methyltransferase (261 aa).

The protein belongs to the methyltransferase superfamily. Tam family.

The protein resides in the cytoplasm. The catalysed reaction is trans-aconitate + S-adenosyl-L-methionine = (E)-3-(methoxycarbonyl)pent-2-enedioate + S-adenosyl-L-homocysteine. Catalyzes the S-adenosylmethionine monomethyl esterification of trans-aconitate. The protein is Probable trans-aconitate 2-methyltransferase of Mycobacterium bovis (strain ATCC BAA-935 / AF2122/97).